A 373-amino-acid polypeptide reads, in one-letter code: LIM domain-binding protein 2 (373 aa).

Disordered regions lie at residues 244–287 (APPA…KTPA) and 327–373 (QYDA…QASQ). The span at 263 to 280 (STSSTSNSSAGNTTNSAG) shows a compositional bias: low complexity. The LIM interaction domain (LID) domain maps to 298–337 (DVMVVGEPTLMGGEFGDEDERLITRLENTQYDAANGMDDE). Residues 341 to 373 (NNSPALGNNSPWNSKPPATQETKSENAPPQASQ) are compositionally biased toward polar residues.

The protein belongs to the LDB family. As to quaternary structure, interacts with LHX9. Interacts with SLK; leading to negatively regulate SLK kinase activity. Interacts with LMO4. In terms of assembly, interacts with PITX1. Interacts with LHX3. Ubiquitinated by RLIM/RNF12, leading to its degradation by the proteasome. Expressed in multiple tissues including heart, brain, liver, kidney, testis, lung and muscle, with expression highest in the brain, trigeminal ganglia, and lung.

Its subcellular location is the nucleus. Its function is as follows. Transcription cofactor. Binds to the LIM domain of a wide variety of LIM domain-containing transcription factors. Functionally, regulates the transcriptional activity of LIM-containing proteins such as LHX3 or PITX1. This chain is LIM domain-binding protein 2 (Ldb2), found in Mus musculus (Mouse).